The following is a 151-amino-acid chain: 3-dehydroquinate dehydratase (151 aa).

Tyr-24 serves as the catalytic Proton acceptor. Asn-76, His-82, and Asp-89 together coordinate substrate. The Proton donor role is filled by His-102. Substrate-binding positions include 103-104 (VS) and Arg-113.

The protein belongs to the type-II 3-dehydroquinase family. In terms of assembly, homododecamer.

The enzyme catalyses 3-dehydroquinate = 3-dehydroshikimate + H2O. It functions in the pathway metabolic intermediate biosynthesis; chorismate biosynthesis; chorismate from D-erythrose 4-phosphate and phosphoenolpyruvate: step 3/7. In terms of biological role, catalyzes a trans-dehydration via an enolate intermediate. The sequence is that of 3-dehydroquinate dehydratase from Rhodopseudomonas palustris (strain HaA2).